A 177-amino-acid polypeptide reads, in one-letter code: Peptide methionine sulfoxide reductase MsrA (177 aa).

Cys11 is a catalytic residue.

It belongs to the MsrA Met sulfoxide reductase family.

It carries out the reaction L-methionyl-[protein] + [thioredoxin]-disulfide + H2O = L-methionyl-(S)-S-oxide-[protein] + [thioredoxin]-dithiol. The catalysed reaction is [thioredoxin]-disulfide + L-methionine + H2O = L-methionine (S)-S-oxide + [thioredoxin]-dithiol. In terms of biological role, has an important function as a repair enzyme for proteins that have been inactivated by oxidation. Catalyzes the reversible oxidation-reduction of methionine sulfoxide in proteins to methionine. This chain is Peptide methionine sulfoxide reductase MsrA, found in Picrophilus torridus (strain ATCC 700027 / DSM 9790 / JCM 10055 / NBRC 100828 / KAW 2/3).